Reading from the N-terminus, the 127-residue chain is Small ribosomal subunit protein uS11 (127 aa).

It belongs to the universal ribosomal protein uS11 family. As to quaternary structure, part of the 30S ribosomal subunit. Interacts with proteins S7 and S18. Binds to IF-3.

In terms of biological role, located on the platform of the 30S subunit, it bridges several disparate RNA helices of the 16S rRNA. Forms part of the Shine-Dalgarno cleft in the 70S ribosome. In Nitrosococcus oceani (strain ATCC 19707 / BCRC 17464 / JCM 30415 / NCIMB 11848 / C-107), this protein is Small ribosomal subunit protein uS11.